We begin with the raw amino-acid sequence, 118 residues long: Sarafotoxin-i1 (118 aa).

A signal peptide spans 1–23 (MALLPRLAAGGLLLLLALAALDG). A propeptide spanning residues 24–84 (KPAPPKLLQK…LSPLRKPQPL (61 aa)) is cleaved from the precursor. 2 cysteine pairs are disulfide-bonded: C85–C99 and C87–C95. Residues 112–118 (PSPIQSS) constitute a propeptide that is removed on maturation.

The protein belongs to the endothelin/sarafotoxin family. Different length molecules ranging from 15 (85-99) to 30 amino acids (85-114) have been found in the venom. In terms of tissue distribution, expressed by the venom gland.

It localises to the secreted. In terms of biological role, vasoconstrictor activity. These toxins cause cardiac arrest probably as a result of coronary vasospasm. Functionally, sarafotoxin-i3: vasoconstrictor activity. Causes cardiac arrest probably as a result of coronary vasospasm. Displays low agonistic activities towards endothelin-2 receptor (EDNRB) (displays affinity in the micromolar range). The chain is Sarafotoxin-i1 from Atractaspis irregularis (Variable burrowing asp).